The primary structure comprises 359 residues: MFESVVQLLEEHEELQQQLGDPELHADASRSRKVNRRYAELSRIVAAHAEWTQLGDDLAAARELAEEDPAFADEIPGLEQALDAAQEKLRRLLIPRDPDDARDVIMEIKMGEGGAESALFAADLLRMYLHYAESRRWKTEVLSQTQSDLGGYKDVQVAIKGTSDDPALGVWAHLKYEGGVHRVQRVPATESQGRIHTSAAGVLVIPEVEEVEEVAIDPNDLKIDVYRSSGPGGQSVNTTDSAVRITHLPTGIVVAMQNEKSQLQNREAGMRVLRARVLAKQQEEIDAEASAVRRSQIRTMDRSERIRTYNFPENRIADHRTGYKAYNLDAVMDGALDPVVESCIQADEEARLDALGTDA.

Position 234 is an N5-methylglutamine (Gln-234).

It belongs to the prokaryotic/mitochondrial release factor family. Methylated by PrmC. Methylation increases the termination efficiency of RF1.

Its subcellular location is the cytoplasm. Its function is as follows. Peptide chain release factor 1 directs the termination of translation in response to the peptide chain termination codons UAG and UAA. The protein is Peptide chain release factor 1 of Clavibacter michiganensis subsp. michiganensis (strain NCPPB 382).